A 350-amino-acid chain; its full sequence is 2-oxoisovalerate dehydrogenase subunit beta (350 aa).

In terms of assembly, heterodimer of an alpha and a beta chain. It depends on thiamine diphosphate as a cofactor.

It carries out the reaction N(6)-[(R)-lipoyl]-L-lysyl-[protein] + 3-methyl-2-oxobutanoate + H(+) = N(6)-[(R)-S(8)-2-methylpropanoyldihydrolipoyl]-L-lysyl-[protein] + CO2. The branched-chain alpha-keto dehydrogenase complex catalyzes the overall conversion of alpha-keto acids to acyl-CoA and CO(2). It contains multiple copies of three enzymatic components: branched-chain alpha-keto acid decarboxylase (E1), lipoamide acyltransferase (E2) and lipoamide dehydrogenase (E3). The protein is 2-oxoisovalerate dehydrogenase subunit beta (bkdA2) of Pseudomonas aeruginosa (strain ATCC 15692 / DSM 22644 / CIP 104116 / JCM 14847 / LMG 12228 / 1C / PRS 101 / PAO1).